The sequence spans 398 residues: Acetyl-CoA acetyltransferase erg10B, cytosolic (398 aa).

The active-site Acyl-thioester intermediate is Cys-92. Tyr-187 contributes to the K(+) binding site. Residues Asn-229 and Lys-232 each contribute to the CoA site. K(+) contacts are provided by Ala-249, Pro-250, and Ser-252. Position 253 (Ser-253) interacts with CoA. Val-350 provides a ligand contact to K(+). Active-site proton acceptor residues include His-354 and Cys-384. Residue Asn-385 participates in chloride binding.

This sequence belongs to the thiolase-like superfamily. Thiolase family. As to quaternary structure, homotetramer. It depends on K(+) as a cofactor.

Its subcellular location is the cytoplasm. It is found in the cytosol. It carries out the reaction 2 acetyl-CoA = acetoacetyl-CoA + CoA. It functions in the pathway metabolic intermediate biosynthesis; (R)-mevalonate biosynthesis; (R)-mevalonate from acetyl-CoA: step 1/3. With respect to regulation, activity is increased by monovalent cations such as K(+), Rb(+) or Cs(+). Functionally, acetyl-CoA acetyltransferase; part of the first module of ergosterol biosynthesis pathway that includes the early steps of the pathway, conserved across all eukaryotes, and which results in the formation of mevalonate from acetyl-coenzyme A (acetyl-CoA). In this module, the cytosolic acetyl-CoA acetyltransferase erg10B catalyzes the formation of acetoacetyl-CoA. The hydroxymethylglutaryl-CoA synthases AFUA_8G07210 and AFUA_3G10660 then condense acetyl-CoA with acetoacetyl-CoA to form HMG-CoA. The rate-limiting step of the early module is the reduction to mevalonate by the 3-hydroxy-3-methylglutaryl-coenzyme A (HMG-CoA) reductases hmg1 and hmg2. Mevalonate is also a precursor for the extracellular siderophore triacetylfusarinine C (TAFC). This Aspergillus fumigatus (strain CBS 144.89 / FGSC A1163 / CEA10) (Neosartorya fumigata) protein is Acetyl-CoA acetyltransferase erg10B, cytosolic.